We begin with the raw amino-acid sequence, 196 residues long: Putative NADH dehydrogenase/NAD(P)H nitroreductase XCV0587 (196 aa).

The protein belongs to the nitroreductase family. HadB/RutE subfamily. Requires FMN as cofactor.

In Xanthomonas euvesicatoria pv. vesicatoria (strain 85-10) (Xanthomonas campestris pv. vesicatoria), this protein is Putative NADH dehydrogenase/NAD(P)H nitroreductase XCV0587.